A 221-amino-acid polypeptide reads, in one-letter code: Iron-sulfur cluster repair protein YtfE (221 aa).

The protein belongs to the RIC family. YtfE subfamily. Homodimer.

It is found in the cytoplasm. Its function is as follows. Di-iron-containing protein involved in the repair of iron-sulfur clusters damaged by oxidative and nitrosative stress conditions. This Pectobacterium atrosepticum (strain SCRI 1043 / ATCC BAA-672) (Erwinia carotovora subsp. atroseptica) protein is Iron-sulfur cluster repair protein YtfE.